Here is an 82-residue protein sequence, read N- to C-terminus: DNA-directed RNA polymerase subunit Rpo5 (82 aa).

The protein belongs to the archaeal Rpo5/eukaryotic RPB5 RNA polymerase subunit family. In terms of assembly, part of the RNA polymerase complex.

It localises to the cytoplasm. The catalysed reaction is RNA(n) + a ribonucleoside 5'-triphosphate = RNA(n+1) + diphosphate. Its function is as follows. DNA-dependent RNA polymerase (RNAP) catalyzes the transcription of DNA into RNA using the four ribonucleoside triphosphates as substrates. This Thermococcus celer protein is DNA-directed RNA polymerase subunit Rpo5.